Reading from the N-terminus, the 229-residue chain is ATP synthase subunit a (229 aa).

6 consecutive transmembrane segments (helical) span residues 25-45 (ADAI…SILA), 82-102 (FFPL…IGLI), 111-131 (NINT…IVGI), 142-162 (FLGP…IGHF), 181-201 (LVLM…MMLM), and 202-222 (GVLV…IYIQ).

Belongs to the ATPase A chain family. F-type ATPases have 2 components, CF(1) - the catalytic core - and CF(0) - the membrane proton channel. CF(1) has five subunits: alpha(3), beta(3), gamma(1), delta(1), epsilon(1). CF(0) has three main subunits: a(1), b(2) and c(9-12). The alpha and beta chains form an alternating ring which encloses part of the gamma chain. CF(1) is attached to CF(0) by a central stalk formed by the gamma and epsilon chains, while a peripheral stalk is formed by the delta and b chains.

It localises to the cell inner membrane. Key component of the proton channel; it plays a direct role in the translocation of protons across the membrane. The sequence is that of ATP synthase subunit a from Geotalea daltonii (strain DSM 22248 / JCM 15807 / FRC-32) (Geobacter daltonii).